Consider the following 83-residue polypeptide: Bublin coiled-coil protein (83 aa).

The segment at 1–25 is disordered; sequence MSGPNGDLGTPVEAGAEGEEDGFGE. Residues 25 to 74 are a coiled coil; that stretch reads EAEYAAINSMLDQINSCLDHLEEKNDHLHARLQELLESNRQTRLEFQQQL. Ser82 carries the post-translational modification Phosphoserine.

Belongs to the UPF0184 (EST00098) family.

The protein resides in the cell junction. It localises to the cytoplasm. Its subcellular location is the cytoskeleton. Functionally, essential for intermediate filament organization in intestinal cells, interacts with intermediate filament and regulates intestinal lumen morphology. This is Bublin coiled-coil protein (BBLN) from Bos taurus (Bovine).